A 257-amino-acid chain; its full sequence is MAPITEEVVHGLKDMIEKLENRVQELEGRLGGESKPKSIAEQMRIVLMGPPGAGKGTQAPRLKEKYCVCHLATGDMLRSQVAKKTELGKEAKKIMDQGGLVSDEIMVNMIKNELDTNTECKNGFILDGFPRTVAQAERLDDMLEARKQKLQHAIELQIDDALLVARITGRLVHPASGRSYHKIFNPPKNDMKDDVTGEPLIQRSDDNAETLKKRLSTYHAQTAPVVEYYKKTGIWRGIDASQEPGQVWKSLLGVFQK.

An ATP-binding site is contributed by glycine 52 to threonine 57. Residues alanine 72–valine 101 are NMP. Residues threonine 73, arginine 78, glycine 99–valine 101, glycine 128–arginine 131, and glutamine 135 each bind AMP. An LID region spans residues glycine 169–aspartate 206. ATP contacts are provided by residues arginine 170 and serine 179–tyrosine 180. Residues arginine 203 and arginine 214 each coordinate AMP. Glutamine 242 serves as a coordination point for ATP.

This sequence belongs to the adenylate kinase family. AK2 subfamily. As to quaternary structure, monomer.

It is found in the cytoplasm. Its subcellular location is the cytosol. The protein resides in the mitochondrion intermembrane space. It carries out the reaction AMP + ATP = 2 ADP. Catalyzes the reversible transfer of the terminal phosphate group between ATP and AMP. Plays an important role in cellular energy homeostasis and in adenine nucleotide metabolism. Adenylate kinase activity is critical for regulation of the phosphate utilization and the AMP de novo biosynthesis pathways. This Neosartorya fischeri (strain ATCC 1020 / DSM 3700 / CBS 544.65 / FGSC A1164 / JCM 1740 / NRRL 181 / WB 181) (Aspergillus fischerianus) protein is Adenylate kinase (adk1).